The primary structure comprises 589 residues: Muscarinic acetylcholine receptor M3 (589 aa).

Residues 1-66 lie on the Extracellular side of the membrane; that stretch reads MTLHSNSTTS…DPLGGHTIWQ (66 aa). 5 N-linked (GlcNAc...) asparagine glycosylation sites follow: Asn-6, Asn-15, Asn-41, Asn-48, and Asn-52. A helical membrane pass occupies residues 67 to 90; sequence VVFIAFLTGFLALVTIIGNILVIV. Over 91-103 the chain is Cytoplasmic; it reads AFKVNKQLKTVNN. A helical transmembrane segment spans residues 104–129; sequence YFLLSLACADLIIGVISMNLFTTYII. At 130–141 the chain is on the extracellular side; sequence MNRWALGNLACD. Cys-140 and Cys-220 are oxidised to a cystine. A helical transmembrane segment spans residues 142–163; sequence LWLSIDYVASNASVMNLLVISF. Over 164–183 the chain is Cytoplasmic; sequence DRYFSITRPLTYRAKRTTKR. The chain crosses the membrane as a helical span at residues 184–205; the sequence is AGVMIGLAWVISFVLWAPAILF. Over 206–228 the chain is Extracellular; sequence WQYFVGKRTVPPGECFIQFLSEP. Residues 229-251 traverse the membrane as a helical segment; the sequence is TITFGTAIAAFYMPVTIMTILYW. The Cytoplasmic segment spans residues 252 to 490; it reads RIYKETEKRT…SLIKEKKAAQ (239 aa). The Basolateral sorting signal signature appears at 274 to 280; it reads AEAENFV. The interval 323-356 is disordered; the sequence is AEQMDQDHSSSDSWNNNDAAASLENSASSDEEDI. Positions 333–344 are enriched in low complexity; it reads SDSWNNNDAAAS. At Ser-384 the chain carries Phosphoserine. The helical transmembrane segment at 491–513 threads the bilayer; sequence TLSAILLAFIITWTPYNIMVLVN. The Extracellular segment spans residues 514 to 525; that stretch reads TFCDSCIPKTYW. Cys-516 and Cys-519 are disulfide-bonded. A helical membrane pass occupies residues 526-545; that stretch reads NLGYWLCYINSTVNPVCYAL. Over 546 to 589 the chain is Cytoplasmic; the sequence is CNKTFRTTFKTLLLCQCDKRKRRKQQYQQRQSVIFHKRVPEQAL.

Belongs to the G-protein coupled receptor 1 family. Muscarinic acetylcholine receptor subfamily. CHRM3 sub-subfamily. In terms of assembly, homodimer; the dimers can form tetramers. Interacts with NALCN. Interacts with TMEM147.

The protein resides in the cell membrane. The protein localises to the postsynaptic cell membrane. It localises to the basolateral cell membrane. It is found in the endoplasmic reticulum membrane. In terms of biological role, the muscarinic acetylcholine receptor mediates various cellular responses, including inhibition of adenylate cyclase, breakdown of phosphoinositides and modulation of potassium channels through the action of G proteins. Primary transducing effect is Pi turnover. This is Muscarinic acetylcholine receptor M3 (Chrm3) from Rattus norvegicus (Rat).